The primary structure comprises 155 residues: Fibroblast growth factor 1 (155 aa).

Ala2 is subject to N-acetylalanine. Positions 2-15 (AEGEITTFTALTEK) are excised as a propeptide. The short motif at 24-27 (KKPK) is the Nuclear localization signal element. Asn33 is a binding site for heparin. The tract at residues 127–143 (KKNGSCKRGPRTHYGQK) is heparin-binding.

Belongs to the heparin-binding growth factors family. Monomer. Homodimer. Interacts with FGFR1, FGFR2, FGFR3 and FGFR4. Affinity between fibroblast growth factors (FGFs) and their receptors is increased by heparan sulfate glycosaminoglycans that function as coreceptors. Found in a complex with FGFBP1, FGF1 and FGF2. Interacts with FGFBP1. Part of a Cu(2+)-dependent multiprotein aggregate containing FGF1, S100A13 and SYT1. Interacts with SYT1. Interacts with S100A13. Interacts with LRRC59. Interacts with CSNKA, CSNKB and FIBP. While binding with LRRC59, CSNKA and FIBP seem mutually exclusive, CSNKB and FIBP may cooperatively interact with FGF1. Forms a ternary complex with FGFR1 and ITGAV:ITGB3 and induces the recruitment of PTPN11 to the complex. Post-translationally, in the nucleus, phosphorylated by PKC/PRKCD. As to expression, predominantly expressed in kidney and brain. Detected at much lower levels in heart and skeletal muscle.

The protein localises to the secreted. The protein resides in the cytoplasm. It localises to the cell cortex. It is found in the cytosol. Its subcellular location is the nucleus. Plays an important role in the regulation of cell survival, cell division, angiogenesis, cell differentiation and cell migration. Functions as a potent mitogen in vitro. Acts as a ligand for FGFR1 and integrins. Binds to FGFR1 in the presence of heparin leading to FGFR1 dimerization and activation via sequential autophosphorylation on tyrosine residues which act as docking sites for interacting proteins, leading to the activation of several signaling cascades. Binds to integrin ITGAV:ITGB3. Its binding to integrin, subsequent ternary complex formation with integrin and FGFR1, and the recruitment of PTPN11 to the complex are essential for FGF1 signaling. Induces the phosphorylation and activation of FGFR1, FRS2, MAPK3/ERK1, MAPK1/ERK2 and AKT1. Can induce angiogenesis. The protein is Fibroblast growth factor 1 (FGF1) of Homo sapiens (Human).